A 525-amino-acid chain; its full sequence is ATP synthase subunit alpha (525 aa).

169–176 (GDRQTGKT) contacts ATP.

It belongs to the ATPase alpha/beta chains family. As to quaternary structure, F-type ATPases have 2 components, CF(1) - the catalytic core - and CF(0) - the membrane proton channel. CF(1) has five subunits: alpha(3), beta(3), gamma(1), delta(1), epsilon(1). CF(0) has three main subunits: a(1), b(2) and c(9-12). The alpha and beta chains form an alternating ring which encloses part of the gamma chain. CF(1) is attached to CF(0) by a central stalk formed by the gamma and epsilon chains, while a peripheral stalk is formed by the delta and b chains.

It is found in the cell membrane. The catalysed reaction is ATP + H2O + 4 H(+)(in) = ADP + phosphate + 5 H(+)(out). Produces ATP from ADP in the presence of a proton gradient across the membrane. The alpha chain is a regulatory subunit. This chain is ATP synthase subunit alpha, found in Mycoplasma capricolum subsp. capricolum (strain California kid / ATCC 27343 / NCTC 10154).